Consider the following 76-residue polypeptide: Exodeoxyribonuclease 7 small subunit (76 aa).

The protein belongs to the XseB family. As to quaternary structure, heterooligomer composed of large and small subunits.

It is found in the cytoplasm. The catalysed reaction is Exonucleolytic cleavage in either 5'- to 3'- or 3'- to 5'-direction to yield nucleoside 5'-phosphates.. In terms of biological role, bidirectionally degrades single-stranded DNA into large acid-insoluble oligonucleotides, which are then degraded further into small acid-soluble oligonucleotides. This is Exodeoxyribonuclease 7 small subunit from Bacillus cereus (strain ATCC 14579 / DSM 31 / CCUG 7414 / JCM 2152 / NBRC 15305 / NCIMB 9373 / NCTC 2599 / NRRL B-3711).